Consider the following 433-residue polypeptide: Serine--tRNA ligase (433 aa).

Residue 235-237 coordinates L-serine; sequence TSE. 266-268 contributes to the ATP binding site; that stretch reads RSE. Glutamate 289 is an L-serine binding site. 353–356 contributes to the ATP binding site; the sequence is EISS. An L-serine-binding site is contributed by serine 388.

Belongs to the class-II aminoacyl-tRNA synthetase family. Type-1 seryl-tRNA synthetase subfamily. As to quaternary structure, homodimer. The tRNA molecule binds across the dimer.

It is found in the cytoplasm. It carries out the reaction tRNA(Ser) + L-serine + ATP = L-seryl-tRNA(Ser) + AMP + diphosphate + H(+). The catalysed reaction is tRNA(Sec) + L-serine + ATP = L-seryl-tRNA(Sec) + AMP + diphosphate + H(+). It functions in the pathway aminoacyl-tRNA biosynthesis; selenocysteinyl-tRNA(Sec) biosynthesis; L-seryl-tRNA(Sec) from L-serine and tRNA(Sec): step 1/1. Functionally, catalyzes the attachment of serine to tRNA(Ser). Is also able to aminoacylate tRNA(Sec) with serine, to form the misacylated tRNA L-seryl-tRNA(Sec), which will be further converted into selenocysteinyl-tRNA(Sec). The protein is Serine--tRNA ligase of Burkholderia ambifaria (strain ATCC BAA-244 / DSM 16087 / CCUG 44356 / LMG 19182 / AMMD) (Burkholderia cepacia (strain AMMD)).